A 103-amino-acid polypeptide reads, in one-letter code: Large ribosomal subunit protein bL21 (103 aa).

The protein belongs to the bacterial ribosomal protein bL21 family. In terms of assembly, part of the 50S ribosomal subunit. Contacts protein L20.

Its function is as follows. This protein binds to 23S rRNA in the presence of protein L20. This is Large ribosomal subunit protein bL21 from Pectobacterium carotovorum subsp. carotovorum (strain PC1).